The sequence spans 307 residues: tRNA dimethylallyltransferase 1 (307 aa).

Residue 11 to 18 (GPTASGKT) coordinates ATP. 13–18 (TASGKT) contacts substrate. Interaction with substrate tRNA stretches follow at residues 36–39 (DSRQ) and 159–163 (QRAIR).

Belongs to the IPP transferase family. Monomer. Mg(2+) serves as cofactor.

The catalysed reaction is adenosine(37) in tRNA + dimethylallyl diphosphate = N(6)-dimethylallyladenosine(37) in tRNA + diphosphate. In terms of biological role, catalyzes the transfer of a dimethylallyl group onto the adenine at position 37 in tRNAs that read codons beginning with uridine, leading to the formation of N6-(dimethylallyl)adenosine (i(6)A). The sequence is that of tRNA dimethylallyltransferase 1 from Parabacteroides distasonis (strain ATCC 8503 / DSM 20701 / CIP 104284 / JCM 5825 / NCTC 11152).